Reading from the N-terminus, the 218-residue chain is MGQKINPLGFRLGVTQNHCSHWFAKPNNYYKLLEEDEKMRNCIYNYVRKHIKSSSNYGGIARIEIERKTDLIQIEIYTGFPALLVESRGRGIEELKADVQTVLNLGNRKLRMALTEVEEPYTEPNILAEYIALQLENRVAFRRTMKKAIELTRKTSVKGIKIQIAGRLNGAEIARVEWAREGRVPLQTIRAQINYCYYPAQTIYGVLGIKVWIFQTEE.

The 72-residue stretch at 47–118 (VRKHIKSSSN…KLRMALTEVE (72 aa)) folds into the KH type-2 domain.

Belongs to the universal ribosomal protein uS3 family. In terms of assembly, part of the 30S ribosomal subunit.

The protein localises to the plastid. The protein resides in the chloroplast. In Anthoceros angustus (Hornwort), this protein is Small ribosomal subunit protein uS3c (rps3).